The primary structure comprises 198 residues: Putative peptidyl-prolyl cis-trans isomerase (198 aa).

In terms of domain architecture, PPIase cyclophilin-type spans 14–195; the sequence is NEIKVAMHTN…HDVVIESIDV (182 aa).

This sequence belongs to the cyclophilin-type PPIase family.

The catalysed reaction is [protein]-peptidylproline (omega=180) = [protein]-peptidylproline (omega=0). PPIases accelerate the folding of proteins. It catalyzes the cis-trans isomerization of proline imidic peptide bonds in oligopeptides. The sequence is that of Putative peptidyl-prolyl cis-trans isomerase from Staphylococcus haemolyticus (strain JCSC1435).